The following is a 349-amino-acid chain: Phenylalanine--tRNA ligase alpha subunit (349 aa).

A Mg(2+)-binding site is contributed by Glu-258.

Belongs to the class-II aminoacyl-tRNA synthetase family. Phe-tRNA synthetase alpha subunit type 1 subfamily. Tetramer of two alpha and two beta subunits. The cofactor is Mg(2+).

The protein localises to the cytoplasm. It carries out the reaction tRNA(Phe) + L-phenylalanine + ATP = L-phenylalanyl-tRNA(Phe) + AMP + diphosphate + H(+). In Rickettsia africae (strain ESF-5), this protein is Phenylalanine--tRNA ligase alpha subunit.